A 422-amino-acid chain; its full sequence is 5'-deoxyadenosine deaminase (422 aa).

Positions 57 and 59 each coordinate Zn(2+). Substrate-binding residues include glutamate 86 and histidine 178. A Zn(2+)-binding site is contributed by histidine 205. 2 residues coordinate substrate: glutamate 208 and aspartate 294. Residue aspartate 294 coordinates Zn(2+).

This sequence belongs to the metallo-dependent hydrolases superfamily. MTA/SAH deaminase family. As to quaternary structure, homotetramer. Zn(2+) serves as cofactor.

The catalysed reaction is 5'-deoxyadenosine + H2O + H(+) = 5'-deoxyinosine + NH4(+). It carries out the reaction S-adenosyl-L-homocysteine + H2O + H(+) = S-inosyl-L-homocysteine + NH4(+). The enzyme catalyses S-methyl-5'-thioadenosine + H2O + H(+) = S-methyl-5'-thioinosine + NH4(+). It catalyses the reaction adenosine + H2O + H(+) = inosine + NH4(+). The protein operates within amino-acid biosynthesis; S-adenosyl-L-methionine biosynthesis. Functionally, catalyzes the deamination of three SAM-derived enzymatic products, namely 5'-deoxyadenosine, S-adenosyl-L-homocysteine, and 5'-methylthioadenosine, to produce the inosine analogs. Can also deaminate adenosine. The preferred substrate for this enzyme is 5'-deoxyadenosine, but all these substrates are efficiently deaminated. Likely functions in a S-adenosyl-L-methionine (SAM) recycling pathway from S-adenosyl-L-homocysteine (SAH) produced from SAM-dependent methylation reactions. May also be involved in the recycling of 5'-deoxyadenosine, whereupon the 5'-deoxyribose moiety of 5'-deoxyinosine is further metabolized to deoxyhexoses used for the biosynthesis of aromatic amino acids in methanogens. The chain is 5'-deoxyadenosine deaminase from Methanococcus vannielii (strain ATCC 35089 / DSM 1224 / JCM 13029 / OCM 148 / SB).